The sequence spans 298 residues: tRNA pseudouridine synthase B (298 aa).

D39 serves as the catalytic Nucleophile.

This sequence belongs to the pseudouridine synthase TruB family. Type 1 subfamily.

The enzyme catalyses uridine(55) in tRNA = pseudouridine(55) in tRNA. In terms of biological role, responsible for synthesis of pseudouridine from uracil-55 in the psi GC loop of transfer RNAs. This Oenococcus oeni (strain ATCC BAA-331 / PSU-1) protein is tRNA pseudouridine synthase B.